A 644-amino-acid polypeptide reads, in one-letter code: Archaeal Lon protease (644 aa).

Polar residues predominate over residues 1-18 (MKTTIKNSRTQESVSYEG). Positions 1 to 30 (MKTTIKNSRTQESVSYEGNETKKGTGETLS) are disordered. Residues 1–137 (MKTTIKNSRT…KARSQDEKKN (137 aa)) lie on the Cytoplasmic side of the membrane. An ATP-binding site is contributed by 71–78 (GEPGVGKS). The next 2 helical transmembrane spans lie at 138–155 (LFMM…FMMN) and 156–171 (QFLA…FLAL). Residues 172–644 (QQFRPRTTVM…PSIMKKPAMH (473 aa)) lie on the Cytoplasmic side of the membrane. Residues 438–617 (GGEVGRVNGL…GDVLEHALIG (180 aa)) enclose the Lon proteolytic domain. Catalysis depends on residues Ser524 and Lys567.

The protein belongs to the peptidase S16 family. Archaeal LonB subfamily. Homohexamer. Organized in a ring with a central cavity.

The protein localises to the cell membrane. ATP-dependent serine protease that mediates the selective degradation of mutant and abnormal proteins as well as certain short-lived regulatory proteins. Degrades polypeptides processively. The sequence is that of Archaeal Lon protease from Methanothermobacter thermautotrophicus (strain ATCC 29096 / DSM 1053 / JCM 10044 / NBRC 100330 / Delta H) (Methanobacterium thermoautotrophicum).